Reading from the N-terminus, the 486-residue chain is Siroheme synthase (486 aa).

Positions 1–204 (MNYLPIFVDL…HQIEQAEALV (204 aa)) are precorrin-2 dehydrogenase /sirohydrochlorin ferrochelatase. NAD(+) is bound by residues 22–23 (HV) and 43–44 (EK). A Phosphoserine modification is found at serine 128. The segment at 216–486 (GEVSLVGAGP…NKETHWKQAA (271 aa)) is uroporphyrinogen-III C-methyltransferase. Proline 225 is a binding site for S-adenosyl-L-methionine. Residue aspartate 248 is the Proton acceptor of the active site. Lysine 270 acts as the Proton donor in catalysis. S-adenosyl-L-methionine-binding positions include 301 to 303 (GGD), valine 306, 331 to 332 (TA), methionine 383, and glycine 412.

In the N-terminal section; belongs to the precorrin-2 dehydrogenase / sirohydrochlorin ferrochelatase family. It in the C-terminal section; belongs to the precorrin methyltransferase family.

The catalysed reaction is uroporphyrinogen III + 2 S-adenosyl-L-methionine = precorrin-2 + 2 S-adenosyl-L-homocysteine + H(+). It catalyses the reaction precorrin-2 + NAD(+) = sirohydrochlorin + NADH + 2 H(+). The enzyme catalyses siroheme + 2 H(+) = sirohydrochlorin + Fe(2+). The protein operates within cofactor biosynthesis; adenosylcobalamin biosynthesis; precorrin-2 from uroporphyrinogen III: step 1/1. It participates in cofactor biosynthesis; adenosylcobalamin biosynthesis; sirohydrochlorin from precorrin-2: step 1/1. It functions in the pathway porphyrin-containing compound metabolism; siroheme biosynthesis; precorrin-2 from uroporphyrinogen III: step 1/1. Its pathway is porphyrin-containing compound metabolism; siroheme biosynthesis; siroheme from sirohydrochlorin: step 1/1. The protein operates within porphyrin-containing compound metabolism; siroheme biosynthesis; sirohydrochlorin from precorrin-2: step 1/1. Its function is as follows. Multifunctional enzyme that catalyzes the SAM-dependent methylations of uroporphyrinogen III at position C-2 and C-7 to form precorrin-2 via precorrin-1. Then it catalyzes the NAD-dependent ring dehydrogenation of precorrin-2 to yield sirohydrochlorin. Finally, it catalyzes the ferrochelation of sirohydrochlorin to yield siroheme. The sequence is that of Siroheme synthase from Actinobacillus pleuropneumoniae serotype 7 (strain AP76).